Reading from the N-terminus, the 219-residue chain is Ribose-5-phosphate isomerase A (219 aa).

Substrate contacts are provided by residues 29-32 (TGST), 82-85 (DGAD), and 95-98 (KGGG). Residue glutamate 104 is the Proton acceptor of the active site. Position 122 (lysine 122) interacts with substrate.

It belongs to the ribose 5-phosphate isomerase family. As to quaternary structure, homodimer.

It carries out the reaction aldehydo-D-ribose 5-phosphate = D-ribulose 5-phosphate. The protein operates within carbohydrate degradation; pentose phosphate pathway; D-ribose 5-phosphate from D-ribulose 5-phosphate (non-oxidative stage): step 1/1. Its function is as follows. Catalyzes the reversible conversion of ribose-5-phosphate to ribulose 5-phosphate. The chain is Ribose-5-phosphate isomerase A from Chromobacterium violaceum (strain ATCC 12472 / DSM 30191 / JCM 1249 / CCUG 213 / NBRC 12614 / NCIMB 9131 / NCTC 9757 / MK).